The chain runs to 188 residues: UPF0397 protein LACR_0367 (188 aa).

The next 5 membrane-spanning stretches (helical) occupy residues isoleucine 14–isoleucine 34, alanine 48–isoleucine 68, alanine 80–valine 100, isoleucine 120–leucine 140, and glutamine 152–leucine 172.

Belongs to the UPF0397 family.

The protein localises to the cell membrane. This chain is UPF0397 protein LACR_0367, found in Lactococcus lactis subsp. cremoris (strain SK11).